The chain runs to 261 residues: Acetylglutamate kinase (261 aa).

Residues 45–46 (GG), arginine 67, and asparagine 162 contribute to the substrate site.

It belongs to the acetylglutamate kinase family. ArgB subfamily.

It is found in the cytoplasm. It catalyses the reaction N-acetyl-L-glutamate + ATP = N-acetyl-L-glutamyl 5-phosphate + ADP. It functions in the pathway amino-acid biosynthesis; L-arginine biosynthesis; N(2)-acetyl-L-ornithine from L-glutamate: step 2/4. Its function is as follows. Catalyzes the ATP-dependent phosphorylation of N-acetyl-L-glutamate. The chain is Acetylglutamate kinase from Bacteroides fragilis (strain ATCC 25285 / DSM 2151 / CCUG 4856 / JCM 11019 / LMG 10263 / NCTC 9343 / Onslow / VPI 2553 / EN-2).